The primary structure comprises 334 residues: MIVIPRYTIIKEKASFRIQEILDNLNLKNPLVITGKNTQKYNKDFDFIYYDEIETSDLENIKNYANDYDSVIGIGGGRPIDIGKLIAHKSKKPFLSVPTTASNDGIASPIVSLTQPSYMTEAPIAIIADIDIIKKSPKKLLSAGMGDIVSNITAVLDWELGKIEKSEKYSDSSGIFSKTIAIELMDYVLNSNLEEYPKKLVKALIGSGISIAIAHSSRPASGSEHLFSHALDTMKEKYSIDTNSLHGEQCGVGTLATAQIYLEEGKLEVETFEMLKTSLKVVDAPVTAKQLGFDEEIVIEALSSAHALRNRHTILRNGISKEKAREILEKSEII.

NAD(+) is bound by residues 77 to 81 and 99 to 102; these read GRPID and TTAS. Residue Asp104 coordinates substrate. Ser108 is an NAD(+) binding site. Position 147 (Asp147) interacts with substrate. Asp147 and His225 together coordinate Zn(2+). His229 contacts substrate. A Zn(2+)-binding site is contributed by His246.

Belongs to the glycerol-1-phosphate dehydrogenase family. Zn(2+) serves as cofactor.

The protein localises to the cytoplasm. It catalyses the reaction sn-glycerol 1-phosphate + NAD(+) = dihydroxyacetone phosphate + NADH + H(+). It carries out the reaction sn-glycerol 1-phosphate + NADP(+) = dihydroxyacetone phosphate + NADPH + H(+). Its pathway is membrane lipid metabolism; glycerophospholipid metabolism. Its function is as follows. Catalyzes the NAD(P)H-dependent reduction of dihydroxyacetonephosphate (DHAP or glycerone phosphate) to glycerol 1-phosphate (G1P). The G1P thus generated is used as the glycerophosphate backbone of phospholipids in the cellular membranes of Archaea. In Methanococcus maripaludis (strain DSM 14266 / JCM 13030 / NBRC 101832 / S2 / LL), this protein is Glycerol-1-phosphate dehydrogenase [NAD(P)+].